The following is a 513-amino-acid chain: ATP synthase subunit alpha (513 aa).

ATP is bound at residue Gly-169–Thr-176.

This sequence belongs to the ATPase alpha/beta chains family. F-type ATPases have 2 components, CF(1) - the catalytic core - and CF(0) - the membrane proton channel. CF(1) has five subunits: alpha(3), beta(3), gamma(1), delta(1), epsilon(1). CF(0) has three main subunits: a(1), b(2) and c(9-12). The alpha and beta chains form an alternating ring which encloses part of the gamma chain. CF(1) is attached to CF(0) by a central stalk formed by the gamma and epsilon chains, while a peripheral stalk is formed by the delta and b chains.

The protein localises to the cell inner membrane. It catalyses the reaction ATP + H2O + 4 H(+)(in) = ADP + phosphate + 5 H(+)(out). Functionally, produces ATP from ADP in the presence of a proton gradient across the membrane. The alpha chain is a regulatory subunit. The polypeptide is ATP synthase subunit alpha (Halorhodospira halophila (strain DSM 244 / SL1) (Ectothiorhodospira halophila (strain DSM 244 / SL1))).